The primary structure comprises 196 residues: RNA pyrophosphohydrolase (196 aa).

The Nudix hydrolase domain maps to 6–149 (GYRPNVGIVI…KRDVYRKVMK (144 aa)). Positions 38-59 (GGINDNESAEQAMYRELHEEVG) match the Nudix box motif. A disordered region spans residues 166–196 (SREANSQSNSANKKYSQTKYTKRHFYKSKGQ). Residues 167–184 (REANSQSNSANKKYSQTK) show a composition bias toward polar residues. The span at 185–196 (YTKRHFYKSKGQ) shows a compositional bias: basic residues.

This sequence belongs to the Nudix hydrolase family. RppH subfamily. A divalent metal cation serves as cofactor.

Its function is as follows. Accelerates the degradation of transcripts by removing pyrophosphate from the 5'-end of triphosphorylated RNA, leading to a more labile monophosphorylated state that can stimulate subsequent ribonuclease cleavage. In Haemophilus influenzae (strain 86-028NP), this protein is RNA pyrophosphohydrolase.